Consider the following 150-residue polypeptide: SsrA-binding protein (150 aa).

The protein belongs to the SmpB family.

The protein resides in the cytoplasm. Its function is as follows. Required for rescue of stalled ribosomes mediated by trans-translation. Binds to transfer-messenger RNA (tmRNA), required for stable association of tmRNA with ribosomes. tmRNA and SmpB together mimic tRNA shape, replacing the anticodon stem-loop with SmpB. tmRNA is encoded by the ssrA gene; the 2 termini fold to resemble tRNA(Ala) and it encodes a 'tag peptide', a short internal open reading frame. During trans-translation Ala-aminoacylated tmRNA acts like a tRNA, entering the A-site of stalled ribosomes, displacing the stalled mRNA. The ribosome then switches to translate the ORF on the tmRNA; the nascent peptide is terminated with the 'tag peptide' encoded by the tmRNA and targeted for degradation. The ribosome is freed to recommence translation, which seems to be the essential function of trans-translation. The sequence is that of SsrA-binding protein from Borreliella burgdorferi (strain ATCC 35210 / DSM 4680 / CIP 102532 / B31) (Borrelia burgdorferi).